The primary structure comprises 427 residues: MRSYLRFSDRHRQRPTRPRKRVICSSAHFICSRMSPAATAQSPFGISLHSLSFRLLLIFRGSIVAMSRRFVYKLDQAVTAALGPNGRYIAMVGMTASAVLLTFHYKFREVIAATDNVAEIQSPSKLFYLRLLFGRTRSRITGSVMNINIMPALRDPIYRTLASVGGIDTEEIRYPLRSYKCIGHLFARTLKDKEREIEDIGTQSLASPADGVVTALGDVSSERVEQVKGATYSLRAFLGLMPKVTNPEKNTLKFVVLHLKPKNYHHFHAPAKFDVNVLRHMTGETLPVFSSFLKRFNDIFSVNERVVMSGNWKYGCMHMVAVAAYNVGNIRIDKEPSLRTNELRVVLRHLGGDVETRTYSRQPFEYSVGQHVGEFRLGSTIVLIFEAPHNFTWDMKPGQEVRVGQRLGGVGPIRRAQTEDERLFAFY.

The N-terminal 77 residues, 1–77 (MRSYLRFSDR…RRFVYKLDQA (77 aa)), are a transit peptide targeting the mitochondrion. The Mitochondrial matrix portion of the chain corresponds to 78–88 (VTAALGPNGRY). Residues 89–107 (IAMVGMTASAVLLTFHYKF) form a helical membrane-spanning segment. Topologically, residues 108-427 (REVIAATDNV…TEDERLFAFY (320 aa)) are mitochondrial intermembrane. Catalysis depends on charge relay system; for autoendoproteolytic cleavage activity residues Asp210, His268, and Ser379. Ser379 acts as the Schiff-base intermediate with substrate; via pyruvic acid; for decarboxylase activity in catalysis. The residue at position 379 (Ser379) is a Pyruvic acid (Ser); by autocatalysis.

The protein belongs to the phosphatidylserine decarboxylase family. PSD-B subfamily. Eukaryotic type I sub-subfamily. As to quaternary structure, heterodimer of a large membrane-associated beta subunit and a small pyruvoyl-containing alpha subunit. Requires pyruvate as cofactor. In terms of processing, is synthesized initially as an inactive proenzyme. Formation of the active enzyme involves a self-maturation process in which the active site pyruvoyl group is generated from an internal serine residue via an autocatalytic post-translational modification. Two non-identical subunits are generated from the proenzyme in this reaction, and the pyruvate is formed at the N-terminus of the alpha chain, which is derived from the carboxyl end of the proenzyme. The autoendoproteolytic cleavage occurs by a canonical serine protease mechanism, in which the side chain hydroxyl group of the serine supplies its oxygen atom to form the C-terminus of the beta chain, while the remainder of the serine residue undergoes an oxidative deamination to produce ammonia and the pyruvoyl prosthetic group on the alpha chain. During this reaction, the Ser that is part of the protease active site of the proenzyme becomes the pyruvoyl prosthetic group, which constitutes an essential element of the active site of the mature decarboxylase.

The protein resides in the mitochondrion. It localises to the mitochondrion inner membrane. The catalysed reaction is a 1,2-diacyl-sn-glycero-3-phospho-L-serine + H(+) = a 1,2-diacyl-sn-glycero-3-phosphoethanolamine + CO2. The protein operates within phospholipid metabolism; phosphatidylethanolamine biosynthesis; phosphatidylethanolamine from CDP-diacylglycerol: step 2/2. Functionally, catalyzes the formation of phosphatidylethanolamine (PtdEtn) from phosphatidylserine (PtdSer). Plays a central role in phospholipid metabolism and in the interorganelle trafficking of phosphatidylserine. The chain is Phosphatidylserine decarboxylase proenzyme 1, mitochondrial from Toxoplasma gondii (strain ATCC 50853 / GT1).